Reading from the N-terminus, the 422-residue chain is Zinc finger protein 550 (422 aa).

The KRAB domain occupies 12–83 (VTFKDVAVTF…KRGLSHATCA (72 aa)). The disordered stretch occupies residues 113–158 (LESSTSSDSRLGRARDEEGLLEMQKGKVTPETDLHKETHLGKVSLE). Residues 122–152 (RLGRARDEEGLLEMQKGKVTPETDLHKETHL) show a composition bias toward basic and acidic residues. 8 consecutive C2H2-type zinc fingers follow at residues 203 to 225 (YKCK…QRVH), 231 to 253 (YECN…YLIH), 259 to 281 (YKCL…HPIH), 287 to 309 (YECS…NRTH), 315 to 337 (FECK…YIIH), 343 to 365 (YDCM…QRIH), 371 to 393 (YECT…SVIH), and 399 to 421 (YKCI…QRVH).

Belongs to the krueppel C2H2-type zinc-finger protein family.

Its subcellular location is the nucleus. Its function is as follows. May be involved in transcriptional regulation. The protein is Zinc finger protein 550 (ZNF550) of Homo sapiens (Human).